The primary structure comprises 602 residues: Elongation factor 4 (602 aa).

The tr-type G domain maps to 5–187 (DHIRNFSIIA…ALVKRIPAPK (183 aa)). Residues 17–22 (DHGKST) and 134–137 (NKID) each bind GTP.

Belongs to the TRAFAC class translation factor GTPase superfamily. Classic translation factor GTPase family. LepA subfamily.

Its subcellular location is the cell inner membrane. The enzyme catalyses GTP + H2O = GDP + phosphate + H(+). Required for accurate and efficient protein synthesis under certain stress conditions. May act as a fidelity factor of the translation reaction, by catalyzing a one-codon backward translocation of tRNAs on improperly translocated ribosomes. Back-translocation proceeds from a post-translocation (POST) complex to a pre-translocation (PRE) complex, thus giving elongation factor G a second chance to translocate the tRNAs correctly. Binds to ribosomes in a GTP-dependent manner. In Zymomonas mobilis subsp. mobilis (strain ATCC 31821 / ZM4 / CP4), this protein is Elongation factor 4.